The primary structure comprises 277 residues: Putative glucose-6-phosphate/phosphate-translocator-like protein 1 (277 aa).

Transmembrane regions (helical) follow at residues Val8 to Leu28, Leu46 to Val66, Met124 to Phe143, Val153 to Phe173, and Pro230 to Ser250.

This sequence belongs to the TPT transporter family. GPT (TC 2.A.7.9) subfamily.

The protein localises to the membrane. This is Putative glucose-6-phosphate/phosphate-translocator-like protein 1 from Arabidopsis thaliana (Mouse-ear cress).